Here is a 611-residue protein sequence, read N- to C-terminus: MKKVQRQMKWLFLAASISAALPVSAAKMVQVDDPSLLEQALSMQARSIVPTQNGFQVVKSVTLPNGKVKVRYQQMYHGLPVFNTSVVATQTEKGIGQVYGMLAQQIDSDVVSTSPQVEQKQAVSIALTHYQQQNPSLTSADLVTENERAQLMVRLDENQMAQMVYLVDFFVATNEPARPFFFIDANSGDVLQTWEGLNHAEATGTGPGGNQKTGFYQYGTDFPGLVINKVGNTCSMMNSAVKTVDMKHATSGGSTFSYSCTDASNYNDYKAINGAYSPLNDAHYFGKVVFDMYKDWMNTTPLTFQLTMRVHYDSNYENAFWNGSSMTFGDGQNTFYPLVDINVSAHEVSHGFTEQNSGLVYQNMSGGINEAFSDIAGEAAEFYMKGSVDWVVGSDIFKSSGGLRYFDQPSKDGRSIDHASQYYNGLNVHYSSGVFNRAYYLLANKANWSVRKGFEVFTVANQLYWTANSTFDQGGCGVAKAAQDLGYNKADVVDAFNQVGVNASCGVVPPTENVLEKGKPVIGLQGTRSSEAFYTFTVASSTSAKVSISLGSGDADLYVKAGSKPTTSSWDCRPYKSGNNEQCTISATPGTTYHVMLKGYSNYSGVTLRLD.

Positions 1-25 (MKKVQRQMKWLFLAASISAALPVSA) are cleaved as a signal peptide. A propeptide spanning residues 26–199 (AKMVQVDDPS…VLQTWEGLNH (174 aa)) is cleaved from the precursor. Position 346 (His346) interacts with Zn(2+). Glu347 is an active-site residue. His350 and Glu370 together coordinate Zn(2+). The Proton donor role is filled by His429.

This sequence belongs to the peptidase M4 family. Ca(2+) is required as a cofactor. Requires Zn(2+) as cofactor. In terms of processing, seems to be more extensively processed.

It localises to the secreted. Functionally, extracellular zinc metalloprotease involved in the virulence mechanism of V.anguillarum. This is Virulence metalloprotease (empA) from Vibrio anguillarum (Listonella anguillarum).